The following is a 353-amino-acid chain: GTPase Obg (353 aa).

Positions 1–159 (MKFLDEAKVY…RWIWLRLKLI (159 aa)) constitute an Obg domain. One can recognise an OBG-type G domain in the interval 160 to 327 (ADAGLVGLPN…ALRALAAVIG (168 aa)). GTP-binding positions include 166-173 (GLPNAGKS), 191-195 (FTTLH), 212-215 (DIPG), 279-282 (NKID), and 308-310 (SGV). Positions 173 and 193 each coordinate Mg(2+).

This sequence belongs to the TRAFAC class OBG-HflX-like GTPase superfamily. OBG GTPase family. In terms of assembly, monomer. It depends on Mg(2+) as a cofactor.

It is found in the cytoplasm. In terms of biological role, an essential GTPase which binds GTP, GDP and possibly (p)ppGpp with moderate affinity, with high nucleotide exchange rates and a fairly low GTP hydrolysis rate. Plays a role in control of the cell cycle, stress response, ribosome biogenesis and in those bacteria that undergo differentiation, in morphogenesis control. In Rhodopseudomonas palustris (strain BisB5), this protein is GTPase Obg.